The chain runs to 314 residues: Homeobox protein SIX3 (314 aa).

Residues 188 to 247 (GEQKTHCFKERTRSLLREWYLQDPYPNPSKKRELAQATGLTPTQVGNWFKNRRQRDRAAA) constitute a DNA-binding region (homeobox). Disordered stretches follow at residues 214-233 (NPSK…TQVG) and 240-314 (RQRD…ECDV). A compositionally biased stretch (low complexity) spans 271-293 (PTHSSAESPSTAASPTTSVSSLT). The span at 298–314 (TGTSILSVTSSDSECDV) shows a compositional bias: polar residues.

The protein belongs to the SIX/Sine oculis homeobox family.

It is found in the nucleus. Its function is as follows. Transcriptional regulator which can act as both a transcriptional repressor and activator by binding a ATTA homeodomain core recognition sequence on these target genes. During forebrain development represses WNT1 expression allowing zona limitans intrathalamica formation and thereby ensuring proper anterio-posterior patterning of the diencephalon and formation of the rostral diencephalon. Acts as a direct upstream activator of SHH expression in the rostral diencephalon ventral midline and that in turn SHH maintains its expression. In addition, Six3 activity is required for the formation of the telencephalon. During postnatal stages of brain development is necessary for ependymal cell maturation by promoting the maturation of radial glia into ependymal cells through regulation of neuroblast proliferation and migration. Acts on the proliferation and differentiation of neural progenitor cells through activating transcription of CCND1 and CCND2. During early lens formation plays a role in lens induction and specification by activating directly PAX6 in the presumptive lens ectoderm. In turn PAX6 activates SIX3 resulting in activation of PDGFRA and CCND1 promoting cell proliferation. Also is required for the neuroretina development by directly suppressing WNT8B expression in the anterior neural plate territory. Its action during retina development and lens morphogenesis is AES and TLE4-dependent manner. Furthermore, during eye development regulates several genes expression. Before and during early lens development represses the CRYGF promoter by binding a SIX repressor element. Directly activates RHO transcription, or cooperates with CRX or NRL. Six3 also functions in the formation of the proximodistal axis of the optic cup, and promotes the formation of optic vesicles-like structures. During pituitary development, acts in parallel or alternatively with HESX1 to control cell proliferation through Wnt/beta-catenin pathway. Plays a role in eye development by suppressing WNT1 expression and in dorsal-ventral patterning by repressing BMP signaling pathway. The sequence is that of Homeobox protein SIX3 (SIX3) from Gallus gallus (Chicken).